The chain runs to 506 residues: Dual specificity protein kinase shkC (506 aa).

The disordered stretch occupies residues 1-21 (MDSGLGSSYPEERSGPPEIRP). The segment covering 10–21 (PEERSGPPEIRP) has biased composition (basic and acidic residues). One can recognise a Protein kinase domain in the interval 24-284 (INFEELIGTG…IISALDHVII (261 aa)). Residues 30-38 (IGTGSFGKV) and Lys-51 contribute to the ATP site. Asp-147 acts as the Proton acceptor in catalysis. An SH2 domain is found at 396-488 (WFHGDLDTTE…KLDSQLGVPN (93 aa)).

The protein belongs to the protein kinase superfamily. TKL Ser/Thr protein kinase family. SH2 domain-containing protein kinase subfamily.

It is found in the membrane. It catalyses the reaction L-seryl-[protein] + ATP = O-phospho-L-seryl-[protein] + ADP + H(+). It carries out the reaction L-threonyl-[protein] + ATP = O-phospho-L-threonyl-[protein] + ADP + H(+). Functionally, required for proper chemotaxis and phagocytosis; proper spatiotemporal control of F-actin levels in chemotaxing cells. Negative regulator of the PI3K (phosphatidylinositol 3 kinase) pathway. Predominantly phosphorylates serines and threonines and tyrosines at a lower level. The polypeptide is Dual specificity protein kinase shkC (shkC) (Dictyostelium discoideum (Social amoeba)).